Here is a 134-residue protein sequence, read N- to C-terminus: Transcription antitermination protein NusB (134 aa).

The protein belongs to the NusB family.

Functionally, involved in transcription antitermination. Required for transcription of ribosomal RNA (rRNA) genes. Binds specifically to the boxA antiterminator sequence of the ribosomal RNA (rrn) operons. The chain is Transcription antitermination protein NusB from Shewanella frigidimarina (strain NCIMB 400).